A 343-amino-acid chain; its full sequence is ATP-dependent 6-phosphofructokinase (343 aa).

ATP contacts are provided by residues glycine 10, 73-74 (RV), and 103-106 (GEGT). A Mg(2+)-binding site is contributed by glutamate 104. Residues 126-128 (TID), arginine 163, 170-172 (MGR), glutamate 223, arginine 267, and 273-276 (HIQR) each bind substrate. Aspartate 128 acts as the Proton acceptor in catalysis.

Belongs to the phosphofructokinase type A (PFKA) family. Mixed-substrate PFK group III subfamily. In terms of assembly, homodimer or homotetramer. Mg(2+) is required as a cofactor.

The protein resides in the cytoplasm. It carries out the reaction beta-D-fructose 6-phosphate + ATP = beta-D-fructose 1,6-bisphosphate + ADP + H(+). It catalyses the reaction D-tagatofuranose 6-phosphate + ATP = D-tagatofuranose 1,6-bisphosphate + ADP + H(+). It functions in the pathway carbohydrate degradation; glycolysis; D-glyceraldehyde 3-phosphate and glycerone phosphate from D-glucose: step 3/4. Catalyzes the phosphorylation of D-fructose 6-phosphate to fructose 1,6-bisphosphate by ATP, the first committing step of glycolysis. Can also catalyze the phosphorylation of tagatose-6-phosphate. The sequence is that of ATP-dependent 6-phosphofructokinase from Mycobacterium tuberculosis (strain CDC 1551 / Oshkosh).